A 476-amino-acid polypeptide reads, in one-letter code: UPF0481 protein At3g47200 (476 aa).

Residues 1 to 24 form a disordered region; that stretch reads MADKTDIISSSSDKASPPPPSAFR. The next 2 helical transmembrane spans lie at 133 to 153 and 439 to 459; these read LMFM…IMSG and AVLF…LSYL.

Belongs to the UPF0481 family.

The protein resides in the membrane. This is UPF0481 protein At3g47200 from Arabidopsis thaliana (Mouse-ear cress).